A 123-amino-acid polypeptide reads, in one-letter code: Small ribosomal subunit protein uS12 (123 aa).

Residue aspartate 89 is modified to 3-methylthioaspartic acid.

The protein belongs to the universal ribosomal protein uS12 family. Part of the 30S ribosomal subunit. Contacts proteins S8 and S17. May interact with IF1 in the 30S initiation complex.

Functionally, with S4 and S5 plays an important role in translational accuracy. In terms of biological role, interacts with and stabilizes bases of the 16S rRNA that are involved in tRNA selection in the A site and with the mRNA backbone. Located at the interface of the 30S and 50S subunits, it traverses the body of the 30S subunit contacting proteins on the other side and probably holding the rRNA structure together. The combined cluster of proteins S8, S12 and S17 appears to hold together the shoulder and platform of the 30S subunit. In Anaeromyxobacter dehalogenans (strain 2CP-1 / ATCC BAA-258), this protein is Small ribosomal subunit protein uS12.